A 341-amino-acid chain; its full sequence is Gibberellin 2-beta-dioxygenase 5 (341 aa).

A Fe2OG dioxygenase domain is found at R187–P290. Y198 is a binding site for 2-oxoglutarate. Positions 213, 215, and 271 each coordinate Fe cation. R281 and S283 together coordinate 2-oxoglutarate.

Belongs to the iron/ascorbate-dependent oxidoreductase family. GA2OX subfamily. L-ascorbate is required as a cofactor. Requires Fe(2+) as cofactor. In terms of tissue distribution, expressed in roots, leaves, culms, leaf sheaths and young panicles.

Its subcellular location is the cytoplasm. It is found in the nucleus. It carries out the reaction gibberellin A1 + 2-oxoglutarate + O2 = gibberellin A8 + succinate + CO2. Its pathway is plant hormone biosynthesis; gibberellin biosynthesis. Catalyzes the 2-beta-hydroxylation of several biologically active gibberellins (GAs), leading to the homeostatic regulation of their endogenous level. Catabolism of GAs plays a central role in plant development. In vitro, converts GA12 and GA53 to the corresponding 2-beta-hydroxylated products GA110 and GA97, respectively. This is Gibberellin 2-beta-dioxygenase 5 from Oryza sativa subsp. japonica (Rice).